The following is a 339-amino-acid chain: Protein-glutamate methylesterase/protein-glutamine glutaminase (339 aa).

The Response regulatory domain maps to 2 to 119 (RIGVVNDMPM…EGNASSQSAR (118 aa)). D53 is modified (4-aspartylphosphate). In terms of domain architecture, CheB-type methylesterase spans 149–338 (PTPRRLIAIG…SRIIEACERS (190 aa)). Catalysis depends on residues S160, H187, and D280.

This sequence belongs to the CheB family. Post-translationally, phosphorylated by CheA. Phosphorylation of the N-terminal regulatory domain activates the methylesterase activity.

It is found in the cytoplasm. The enzyme catalyses [protein]-L-glutamate 5-O-methyl ester + H2O = L-glutamyl-[protein] + methanol + H(+). It catalyses the reaction L-glutaminyl-[protein] + H2O = L-glutamyl-[protein] + NH4(+). Involved in chemotaxis. Part of a chemotaxis signal transduction system that modulates chemotaxis in response to various stimuli. Catalyzes the demethylation of specific methylglutamate residues introduced into the chemoreceptors (methyl-accepting chemotaxis proteins or MCP) by CheR. Also mediates the irreversible deamidation of specific glutamine residues to glutamic acid. The polypeptide is Protein-glutamate methylesterase/protein-glutamine glutaminase (Mesorhizobium japonicum (strain LMG 29417 / CECT 9101 / MAFF 303099) (Mesorhizobium loti (strain MAFF 303099))).